Here is a 175-residue protein sequence, read N- to C-terminus: Protein FMP23, mitochondrial (175 aa).

The N-terminal 38 residues, 1 to 38 (MLINHLSKIRTVRHFSNIKPVLSKEVSRRVIVAPASHF), are a transit peptide targeting the mitochondrion.

Its subcellular location is the mitochondrion. May be involved in mitochondrial iron or copper homeostatis. The chain is Protein FMP23, mitochondrial (FMP23) from Saccharomyces cerevisiae (strain ATCC 204508 / S288c) (Baker's yeast).